Reading from the N-terminus, the 189-residue chain is GTP cyclohydrolase 1 (189 aa).

3 residues coordinate Zn(2+): Cys78, His81, and Cys150.

The protein belongs to the GTP cyclohydrolase I family. As to quaternary structure, homomer.

It catalyses the reaction GTP + H2O = 7,8-dihydroneopterin 3'-triphosphate + formate + H(+). The protein operates within cofactor biosynthesis; 7,8-dihydroneopterin triphosphate biosynthesis; 7,8-dihydroneopterin triphosphate from GTP: step 1/1. The sequence is that of GTP cyclohydrolase 1 from Listeria monocytogenes serotype 4a (strain HCC23).